Consider the following 218-residue polypeptide: Embryonic polyadenylate-binding protein 2-B (218 aa).

2 disordered regions span residues 1–24 (MSERVSEEPGLDKGDRAEECELDD) and 169–218 (RTNM…NNPY). Residues 93-170 (RSVYVGNVDY…RTIKVLPKRT (78 aa)) enclose the RRM domain. Over residues 198 to 209 (QRPRGRPFRGRG) the composition is skewed to basic residues.

As to quaternary structure, homodimer; Upon poly(A) binding, undergoes a dimer-monomer transition that removes the polyproline motif from the RNA recognition site and allows it to be replaced by the adenosine nucleotides of poly(A).

Its subcellular location is the cytoplasm. Binds the poly(A) tail of mRNA. Unable to interact with the cap-binding complex and is therefore unlikely to be involved in translation initiation. The sequence is that of Embryonic polyadenylate-binding protein 2-B (Pabpn1l-b) from Xenopus laevis (African clawed frog).